The primary structure comprises 162 residues: Nucleotide-binding protein CMM_2802 (162 aa).

This sequence belongs to the YajQ family.

Nucleotide-binding protein. This Clavibacter michiganensis subsp. michiganensis (strain NCPPB 382) protein is Nucleotide-binding protein CMM_2802.